The following is a 1386-amino-acid chain: X-linked retinitis pigmentosa GTPase regulator homolog (1386 aa).

Disordered regions lie at residues 1–25 (MFFKRSTNSRKTSANSSSDTSTSSE), 37–56 (AGARSQKGSVHRQSGKKARR), and 730–760 (MPQMNAKSKRSDSVTNGAPTLPPPAPKPEQH). The span at 9-25 (SRKTSANSSSDTSTSSE) shows a compositional bias: low complexity. Over residues 45 to 56 (SVHRQSGKKARR) the composition is skewed to basic residues. RCC1 repeat units follow at residues 737-787 (SKRS…VLSS), 788-838 (SGQL…FICS), 839-891 (DGSL…VLTD), and 893-943 (GRVL…CITE). A disordered region spans residues 972-994 (LKNTEDPSSPSPSTNGSTPRVNL). RCC1 repeat units lie at residues 1034–1085 (EGTL…ASTD) and 1087–1139 (GSVF…FVQK).

Functionally, could be a guanine-nucleotide releasing factor for glo-1. May play a role in gut granule biogenesis. Regulates axon termination in PLM and ALM neurons. The protein is X-linked retinitis pigmentosa GTPase regulator homolog (glo-4) of Caenorhabditis elegans.